We begin with the raw amino-acid sequence, 815 residues long: RNA-binding protein 5 (815 aa).

The tract at residues 1-93 is disordered; it reads MGSDKRVSRT…EHDYRHDISD (93 aa). Phosphoserine is present on residues Ser18, Ser59, Ser69, Ser72, and Ser78. The RRM 1 domain occupies 98 to 178; the sequence is KTIMLRGLPI…KHIAMHYSNP (81 aa). Residues 181-210 form a RanBP2-type zinc finger; it reads KFEDWLCNKCCLNNFRKRLKCFRCGADKFD. The RRM 2 domain maps to 231 to 315; sequence DTIILRNIAP…KTIGVDFAKS (85 aa). The segment at 321 to 809 is required for interaction with U2AF2; sequence VLPDGNRVSA…KDAVRKAMFA (489 aa). Disordered regions lie at residues 407–468 and 508–540; these read AVVS…DESS and AAESSSNQQAGLPSTKEGKEKKEKPKSKTAQQI. The segment covering 411–422 has biased composition (polar residues); it reads QSPQLYNQTSNP. The segment covering 426-446 has biased composition (low complexity); it reads PTEEAQPSTSTSTQAPAASPT. Phosphoserine is present on Ser444. Residues 452–535 are sufficient for interaction with ACIN1, PRPF8, SFRS3, SNRPB, SNRPN, SNRNP70 and SNRNP200; sequence TKYAVPDTST…KEKKEKPKSK (84 aa). Residues 510 to 519 are compositionally biased toward polar residues; that stretch reads ESSSNQQAGL. Phosphoserine occurs at positions 621 and 624. The C2H2-type zinc-finger motif lies at 647–672; that stretch reads MACLLCRRQFPNRDALVRHQQLSDLH. Residues 743 to 789 form the G-patch domain; it reads HSNIGNKMLQAMGWREGSGLGRKCQGITAPIEAQVRLKGAGLGAKGS.

It belongs to the RBM5/RBM10 family. Component of the spliceosome A complex (also known as the prespliceosome). Appears to dissociate from the spliceosome upon formation of the spliceosome B complex (also known as the precatalytic spliceosome), in which the heterotrimeric U4/U6.U5 snRNPs are bound. Interacts with U2AF2; this interaction is direct. Also interacts with ACIN1, PRPF8, SFRS3, SNRPB, SNRPN, SNRNP70 and SNRNP200; these interactions may be indirect.

The protein resides in the nucleus. Its function is as follows. Component of the spliceosome A complex. Binds to ssRNA containing the consensus sequence 5'-AGGUAA-3'. Regulates alternative splicing of a number of mRNAs. May modulate splice site pairing after recruitment of the U1 and U2 snRNPs to the 5' and 3' splice sites of the intron. May both positively and negatively regulate apoptosis by regulating the alternative splicing of several genes involved in this process, including FAS and CASP2/caspase-2. In the case of FAS, promotes production of a soluble form of FAS that inhibits apoptosis. In the case of CASP2/caspase-2, promotes production of a catalytically active form of CASP2/Caspase-2 that induces apoptosis. The protein is RNA-binding protein 5 (Rbm5) of Rattus norvegicus (Rat).